The primary structure comprises 219 residues: uncharacterized protein (219 aa).

Helical transmembrane passes span 14–34, 37–57, 123–143, 155–175, and 189–209; these read LVYS…FGVL, TLGF…AGAS, FLLG…ALGV, VYSA…LPNL, and VALA…AALA.

This sequence belongs to the AzlC family.

The protein resides in the cell membrane. This is an uncharacterized protein from Archaeoglobus fulgidus (strain ATCC 49558 / DSM 4304 / JCM 9628 / NBRC 100126 / VC-16).